The following is a 245-amino-acid chain: Putative [LysW]-aminoadipate/[LysW]-glutamate kinase (245 aa).

R60 and N162 together coordinate substrate.

Belongs to the acetylglutamate kinase family. LysZ subfamily.

The protein localises to the cytoplasm. It carries out the reaction [amino-group carrier protein]-C-terminal-N-(1,4-dicarboxybutan-1-yl)-L-glutamine + ATP = [amino-group carrier protein]-C-terminal-N-(1-carboxy-5-phosphooxy-5-oxopentan-1-yl)-L-glutamine + ADP. It catalyses the reaction [amino-group carrier protein]-C-terminal-gamma-(L-glutamyl)-L-glutamate + ATP = [amino-group carrier protein]-C-terminal-gamma-(5-phospho-L-glutamyl)-L-glutamate + ADP. It functions in the pathway amino-acid biosynthesis; L-lysine biosynthesis via AAA pathway; L-lysine from L-alpha-aminoadipate (Thermus route): step 2/5. It participates in amino-acid biosynthesis; L-arginine biosynthesis. In terms of biological role, involved in both the arginine and lysine biosynthetic pathways. Phosphorylates the LysW-bound precursors glutamate (for arginine biosynthesis), respectively alpha-aminoadipate (for lysine biosynthesis). The chain is Putative [LysW]-aminoadipate/[LysW]-glutamate kinase from Pyrococcus abyssi (strain GE5 / Orsay).